Reading from the N-terminus, the 236-residue chain is NADH-quinone oxidoreductase subunit C (236 aa).

The disordered stretch occupies residues 1 to 20 (MSPPNQDAQEGRPDSPTAEV).

It belongs to the complex I 30 kDa subunit family. In terms of assembly, NDH-1 is composed of 14 different subunits. Subunits NuoB, C, D, E, F, and G constitute the peripheral sector of the complex.

Its subcellular location is the cell membrane. The enzyme catalyses a quinone + NADH + 5 H(+)(in) = a quinol + NAD(+) + 4 H(+)(out). Its function is as follows. NDH-1 shuttles electrons from NADH, via FMN and iron-sulfur (Fe-S) centers, to quinones in the respiratory chain. The immediate electron acceptor for the enzyme in this species is believed to be a menaquinone. Couples the redox reaction to proton translocation (for every two electrons transferred, four hydrogen ions are translocated across the cytoplasmic membrane), and thus conserves the redox energy in a proton gradient. The sequence is that of NADH-quinone oxidoreductase subunit C from Mycobacterium tuberculosis (strain ATCC 25177 / H37Ra).